A 59-amino-acid polypeptide reads, in one-letter code: Large ribosomal subunit protein bL32 (59 aa).

A disordered region spans residues 1–59 (MAVQQNKKSPSKRGMHRSHDALTAPALSVDSTTGEVHRPHHISPNGMYRGRKVVKAKGE). Residues 49-59 (RGRKVVKAKGE) show a composition bias toward basic residues.

Belongs to the bacterial ribosomal protein bL32 family.

This chain is Large ribosomal subunit protein bL32 (rpmF), found in Neisseria meningitidis serogroup B (strain ATCC BAA-335 / MC58).